A 303-amino-acid polypeptide reads, in one-letter code: Terpene synthase (303 aa).

Mg(2+) contacts are provided by Asp-69 and Asp-73. The DDXXD motif motif lies at 69-73 (DDIQD).

This sequence belongs to the FPP/GGPP synthase family. Mg(2+) is required as a cofactor.

It carries out the reaction (2E)-geranyl diphosphate + H2O = (2E)-geraniol + diphosphate. Terpene synthase that is able to convert geraniol diphosphate to geraniol in tea leaves. The sequence is that of Terpene synthase from Matsumurasca onukii (Tea green leafhopper).